Here is an 813-residue protein sequence, read N- to C-terminus: Leucine--tRNA ligase (813 aa).

Residues 40–51 carry the 'HIGH' region motif; the sequence is SYPSGSKLHAGH. The 'KMSKS' region signature appears at 572–576; it reads KMSKS. Lysine 575 provides a ligand contact to ATP.

The protein belongs to the class-I aminoacyl-tRNA synthetase family.

The protein localises to the cytoplasm. The enzyme catalyses tRNA(Leu) + L-leucine + ATP = L-leucyl-tRNA(Leu) + AMP + diphosphate. This is Leucine--tRNA ligase from Clostridium botulinum (strain ATCC 19397 / Type A).